A 100-amino-acid polypeptide reads, in one-letter code: Probable DNA-binding protein HU (100 aa).

It belongs to the bacterial histone-like protein family.

Its function is as follows. Histone-like DNA-binding protein which is capable of wrapping DNA to stabilize it, and thus to prevent its denaturation under extreme environmental conditions. The sequence is that of Probable DNA-binding protein HU (hup) from Chlamydia muridarum (strain MoPn / Nigg).